A 160-amino-acid polypeptide reads, in one-letter code: Putative antiporter subunit mnhE2 (160 aa).

A run of 3 helical transmembrane segments spans residues 22–42 (HFKF…IYIL), 55–75 (IWVA…SSIS), and 100–120 (SDWS…STVI).

Belongs to the CPA3 antiporters (TC 2.A.63) subunit E family. May form a heterooligomeric complex that consists of seven subunits: mnhA2, mnhB2, mnhC2, mnhD2, mnhE2, mnhF2 and mnhG2.

It localises to the cell membrane. This chain is Putative antiporter subunit mnhE2 (mnhE2), found in Staphylococcus aureus (strain USA300).